The primary structure comprises 321 residues: Major immediate early protein (321 aa).

The segment at 86–139 adopts an RING-type zinc-finger fold; sequence CSVCLETYSQQSNDTCPFLIPTTCDHGFCFKCVINLQSNAMNIPHSTVCCPLCN. The tract at residues 228–249 is leucine-zipper; it reads LIEENTRLNEQIQELQHQVRTL.

The protein localises to the host nucleus. Plays some regulatory role in both viral DNA replication and transcriptional transactivation. The polypeptide is Major immediate early protein (PE38) (Lepidoptera (butterflies and moths)).